The sequence spans 685 residues: Serotransferrin (685 aa).

Residues 1–16 form the signal peptide; the sequence is MKPLLLLPLLGCLATI. 2 consecutive Transferrin-like domains span residues 23-329 and 340-666; these read VKWC…ALKI and MKWC…SLRT. C26 and C48 form a disulfide bridge. Residues D72 and Y102 each coordinate Fe(3+). 3 cysteine pairs are disulfide-bonded: C125-C206, C170-C184, and C234-C248. Positions 127, 131, 133, and 134 each coordinate hydrogencarbonate. Y200 is a Fe(3+) binding site. H256 provides a ligand contact to Fe(3+). 2 disulfide bridges follow: C343–C379 and C353–C370. Fe(3+)-binding residues include D394 and Y428. Disulfide bonds link C404–C678, C419–C639, C451–C526, C475–C667, C485–C499, C496–C509, and C566–C580. The hydrogencarbonate site is built by T453, R457, A459, and G460. An N-linked (GlcNAc...) asparagine glycan is attached at N476. Y520 provides a ligand contact to Fe(3+). H588 is a binding site for Fe(3+).

This sequence belongs to the transferrin family. In terms of assembly, monomer.

Its subcellular location is the secreted. Transferrins are iron binding transport proteins which can bind two Fe(3+) ions in association with the binding of an anion, usually bicarbonate. This is Serotransferrin (tf) from Paralichthys olivaceus (Bastard halibut).